The following is a 248-amino-acid chain: MAGHSQFKNIMHRKGRQDAVRSKMFSKLAREITVAAKTGLPDPTMNPRLRLAIQNAKAQSMPKDNIERAVKKAAGGDAENYEEVRYEGYGPGGVAVIVEALTDNRNRTASNVRSTFTKAGGALGETGSVSFSFDRVGEITYKLSAGDADKVMEAAIEAGADDVETDEEGHTITCGFEDIGEVSKALEGALGEAETVKAVWKPQNTVPVDEEKAQSLMKLIDNLEDDDDVQNVYSNFEVSDEVLAKLSA.

This sequence belongs to the TACO1 family.

It is found in the cytoplasm. This Rhizobium meliloti (strain 1021) (Ensifer meliloti) protein is Probable transcriptional regulatory protein R02753.